Consider the following 115-residue polypeptide: MNIIKKIELEQMRLDIPKFKSGDSVKVHMRIVEGEKERIQVFHGNVIRISRGTTNATFTVRKISNGVGVERVFPMHSPFIDRIEVVQQGRVRRSRLYYLRNLKGKAARIKPLKTW.

The protein belongs to the bacterial ribosomal protein bL19 family.

Its function is as follows. This protein is located at the 30S-50S ribosomal subunit interface and may play a role in the structure and function of the aminoacyl-tRNA binding site. This Oleidesulfovibrio alaskensis (strain ATCC BAA-1058 / DSM 17464 / G20) (Desulfovibrio alaskensis) protein is Large ribosomal subunit protein bL19.